Here is a 439-residue protein sequence, read N- to C-terminus: 26S proteasome regulatory subunit 6A (439 aa).

At M1 the chain carries N-acetylmethionine. S9 is modified (phosphoserine). 227–234 (GPPGTGKT) is an ATP binding site. S376 carries the post-translational modification Phosphoserine.

This sequence belongs to the AAA ATPase family. Component of the 19S proteasome regulatory particle complex. The 26S proteasome consists of a 20S core particle (CP) and two 19S regulatory subunits (RP). The regulatory particle is made of a lid composed of 9 subunits, a base containing 6 ATPases including PSMC3 and few additional components. Interacts with PAAF1.

It is found in the cytoplasm. The protein resides in the nucleus. Component of the 26S proteasome, a multiprotein complex involved in the ATP-dependent degradation of ubiquitinated proteins. This complex plays a key role in the maintenance of protein homeostasis by removing misfolded or damaged proteins, which could impair cellular functions, and by removing proteins whose functions are no longer required. Therefore, the proteasome participates in numerous cellular processes, including cell cycle progression, apoptosis, or DNA damage repair. PSMC3 belongs to the heterohexameric ring of AAA (ATPases associated with diverse cellular activities) proteins that unfolds ubiquitinated target proteins that are concurrently translocated into a proteolytic chamber and degraded into peptides. The sequence is that of 26S proteasome regulatory subunit 6A (Psmc3) from Rattus norvegicus (Rat).